The sequence spans 384 residues: WAT1-related protein At4g08290 (384 aa).

The next 10 helical transmembrane spans lie at 15–35 (LLMI…MATL), 43–63 (VVIV…ALIF), 73–93 (LSVL…DQGF), 104–124 (TYTS…AWIL), 140–160 (IIGT…KGPL), 186–206 (WVVG…FYVL), 219–239 (SLSA…ALVV), 255–275 (FAPL…QGMV), 282–302 (VFVT…ASFI), and 307–327 (IHFG…MVVW). EamA domains follow at residues 25-154 (AGTY…LVMT) and 198-326 (VAWS…YMVV).

Belongs to the drug/metabolite transporter (DMT) superfamily. Plant drug/metabolite exporter (P-DME) (TC 2.A.7.4) family.

The protein resides in the membrane. This is WAT1-related protein At4g08290 from Arabidopsis thaliana (Mouse-ear cress).